Here is a 351-residue protein sequence, read N- to C-terminus: Cell division protein FtsZ (351 aa).

GTP is bound by residues 31 to 35, 118 to 120, Glu149, Arg153, and Asp197; these read GAGNN and GTG.

This sequence belongs to the FtsZ family. As to quaternary structure, homodimer. Polymerizes to form a dynamic ring structure in a strictly GTP-dependent manner. Interacts directly with several other division proteins. Interacts with FtsA.

The protein localises to the cytoplasm. Essential cell division protein that forms a contractile ring structure (Z ring) at the future cell division site. The regulation of the ring assembly controls the timing and the location of cell division. One of the functions of the FtsZ ring is to recruit other cell division proteins to the septum to produce a new cell wall between the dividing cells. Binds GTP and shows GTPase activity. The polypeptide is Cell division protein FtsZ (Thermotoga maritima (strain ATCC 43589 / DSM 3109 / JCM 10099 / NBRC 100826 / MSB8)).